A 208-amino-acid polypeptide reads, in one-letter code: MARYTGPVEKIERRLGVSLELKGERRLAGKSALDKRPYAPGQHGQRRTKISEYGLQLREKQKIKFYYGVLEKQFRKFFREANRQEGNTGENLIKLLERRLDNVVYRMGFASTRRFARQLVTHGHILVNGKKVNIPSYLVKEGDRIEIREKSKNNVQIQRALELSQQTGIAPWVDVDKEKLVGVFQRVPEREEVNIPVEERLVVELYSK.

Residues 98-160 form the S4 RNA-binding domain; sequence RRLDNVVYRM…SKNNVQIQRA (63 aa).

This sequence belongs to the universal ribosomal protein uS4 family. Part of the 30S ribosomal subunit. Contacts protein S5. The interaction surface between S4 and S5 is involved in control of translational fidelity.

Its function is as follows. One of the primary rRNA binding proteins, it binds directly to 16S rRNA where it nucleates assembly of the body of the 30S subunit. In terms of biological role, with S5 and S12 plays an important role in translational accuracy. This Nautilia profundicola (strain ATCC BAA-1463 / DSM 18972 / AmH) protein is Small ribosomal subunit protein uS4.